The chain runs to 250 residues: tRNA (guanine-N(1)-)-methyltransferase (250 aa).

S-adenosyl-L-methionine-binding positions include glycine 116 and 136–141 (IGDYVL).

Belongs to the RNA methyltransferase TrmD family. As to quaternary structure, homodimer.

The protein resides in the cytoplasm. It catalyses the reaction guanosine(37) in tRNA + S-adenosyl-L-methionine = N(1)-methylguanosine(37) in tRNA + S-adenosyl-L-homocysteine + H(+). Its function is as follows. Specifically methylates guanosine-37 in various tRNAs. This chain is tRNA (guanine-N(1)-)-methyltransferase, found in Pseudomonas entomophila (strain L48).